The chain runs to 152 residues: UPF0311 protein blr7842 (152 aa).

It belongs to the UPF0311 family.

This Bradyrhizobium diazoefficiens (strain JCM 10833 / BCRC 13528 / IAM 13628 / NBRC 14792 / USDA 110) protein is UPF0311 protein blr7842.